Here is a 458-residue protein sequence, read N- to C-terminus: Ectonucleotide pyrophosphatase/phosphodiesterase family member 7 (458 aa).

Positions 1 to 21 are cleaved as a signal peptide; the sequence is MRGPAVLLTVALATLLAPGAG. Residues 22-433 are Extracellular-facing; the sequence is APVQSQGSQN…RPTLLPKGRS (412 aa). Zn(2+) contacts are provided by D39 and T75. A required for enzyme activity region spans residues 72–78; the sequence is VTMTSPC. T75 (nucleophile) is an active-site residue. Residue N96 coordinates substrate. Residues N100, N121, N146, and N168 are each glycosylated (N-linked (GlcNAc...) asparagine). Positions 199, 203, 246, and 247 each coordinate Zn(2+). A glycan (N-linked (GlcNAc...) asparagine) is linked at N267. H353 contacts Zn(2+). The chain crosses the membrane as a helical span at residues 434-454; the sequence is ALPPSSRPLLVMGLLGTVILL. The Cytoplasmic segment spans residues 455–458; the sequence is SEVA.

Belongs to the nucleotide pyrophosphatase/phosphodiesterase family. Zn(2+) serves as cofactor. Post-translationally, N-glycosylated; required for activity and transport to the plasma membrane. Detected in the colon (at protein level). Expressed in the duodenum, jejunum and liver and at low levels in the ileum. Expression was very low in the esophagus, stomach and colon.

The protein localises to the cell membrane. The enzyme catalyses a sphingomyelin + H2O = phosphocholine + an N-acylsphing-4-enine + H(+). The catalysed reaction is 1-hexadecanoyl-sn-glycero-3-phosphocholine + H2O = 1-hexadecanoyl-sn-glycerol + phosphocholine + H(+). It catalyses the reaction a 1-O-alkyl-2-acetyl-sn-glycero-3-phosphocholine + H2O = a 1-O-alkyl-2-acetyl-sn-glycerol + phosphocholine + H(+). It carries out the reaction 1-O-octadecyl-2-acetyl-sn-glycero-3-phosphocholine + H2O = 1-O-octadecyl-2-acetyl-sn-glycerol + phosphocholine + H(+). Inhibited in a dose dependent manner by ATP, imidazole, orthovanadate and zinc ion. Not inhibited by ADP, AMP and EDTA. In terms of biological role, choline-specific phosphodiesterase that hydrolyzes sphingomyelin releasing the ceramide and phosphocholine and therefore is involved in sphingomyelin digestion, ceramide formation, and fatty acid (FA) absorption in the gastrointestinal tract. Also has phospholipase C activity and can also cleave phosphocholine from palmitoyl lyso-phosphatidylcholine and platelet-activating factor (PAF) leading to its inactivation. Does not have nucleotide pyrophosphatase activity. May promote cholesterol absorption by affecting the levels of sphingomyelin derived from either diet or endogenous sources, in the intestinal lumen. The sequence is that of Ectonucleotide pyrophosphatase/phosphodiesterase family member 7 from Homo sapiens (Human).